We begin with the raw amino-acid sequence, 501 residues long: Glycerol kinase (501 aa).

Thr16 contributes to the ADP binding site. ATP contacts are provided by Thr16, Thr17, and Ser18. Thr16 lines the sn-glycerol 3-phosphate pocket. Position 20 (Arg20) interacts with ADP. Sn-glycerol 3-phosphate contacts are provided by Arg84, Glu85, Tyr135, and Asp242. 5 residues coordinate glycerol: Arg84, Glu85, Tyr135, Asp242, and Gln243. The ADP site is built by Thr264 and Gly307. ATP contacts are provided by Thr264, Gly307, Gln311, and Gly408. Residue Gly408 participates in ADP binding.

It belongs to the FGGY kinase family.

It catalyses the reaction glycerol + ATP = sn-glycerol 3-phosphate + ADP + H(+). Its pathway is polyol metabolism; glycerol degradation via glycerol kinase pathway; sn-glycerol 3-phosphate from glycerol: step 1/1. Functionally, key enzyme in the regulation of glycerol uptake and metabolism. Catalyzes the phosphorylation of glycerol to yield sn-glycerol 3-phosphate. This chain is Glycerol kinase, found in Saccharolobus islandicus (strain L.S.2.15 / Lassen #1) (Sulfolobus islandicus).